The primary structure comprises 95 residues: Protein TusB (95 aa).

The protein belongs to the DsrH/TusB family. Heterohexamer, formed by a dimer of trimers. The hexameric TusBCD complex contains 2 copies each of TusB, TusC and TusD. The TusBCD complex interacts with TusE.

The protein localises to the cytoplasm. Functionally, part of a sulfur-relay system required for 2-thiolation of 5-methylaminomethyl-2-thiouridine (mnm(5)s(2)U) at tRNA wobble positions. The sequence is that of Protein TusB from Escherichia coli O81 (strain ED1a).